A 500-amino-acid polypeptide reads, in one-letter code: Lysine--tRNA ligase (500 aa).

Residues Glu-410 and Glu-417 each coordinate Mg(2+).

This sequence belongs to the class-II aminoacyl-tRNA synthetase family. In terms of assembly, homodimer. Mg(2+) serves as cofactor.

It localises to the cytoplasm. The enzyme catalyses tRNA(Lys) + L-lysine + ATP = L-lysyl-tRNA(Lys) + AMP + diphosphate. This is Lysine--tRNA ligase from Mycoplasma capricolum subsp. capricolum (strain California kid / ATCC 27343 / NCTC 10154).